We begin with the raw amino-acid sequence, 513 residues long: MDFSSLVASQLNAGVIWPEGILIITLMVILIGDLIVGRSARSWLPYVAIAGLLAAVVALYFTWDNPKPVAFLGAFEGDNLSIVFRAIIALSTASTVLMSIRYVEQAGTSLAEFLAIMLTATLGGMFLSGASELVMIFISLEMLSISSYLMTGYMKRDPRSNEAALKYLLIGASSSAIFLYGVSLLYGLSGGETSLSAIAQKLTDVNGGQSLALAIALVFVIAGIAFKISAVPFHQWTPDVYEGSPTPVVAFLSVGSKAAGFALAIRLLVTVFGLVSEQWRFIFIALAILSMILGNVVALAQTSMKRMLAYSSIGQAGFVMIGLTAGTDAGYSSMIFYLLIYLFMNLGAFACVILFALRTGTDQIAEYSGLYQKDPLLTLCLSICLLSLGGIPPLAGFFGKIYLFWAGWQAGLYALVLVGLVTSVASIYYYIRVVKMMVVKEPQEMSDAVKNYPVINWTLTGMRPLQVGIVLSLVATSLAGILSNPLFTLATDSVTTTPILQSAALATHISRAN.

Transmembrane regions (helical) follow at residues 15–35 (VIWP…GDLI), 43–63 (WLPY…YFTW), 80–100 (LSIV…LMSI), 110–130 (LAEF…LSGA), 133–153 (LVMI…MTGY), 168–188 (LLIG…LYGL), 211–231 (LALA…ISAV), 245–265 (PTPV…ALAI), 281–301 (FIFI…ALAQ), 307–327 (MLAY…TAGT), 335–355 (IFYL…VILF), 379–399 (LCLS…GFFG), 401–421 (IYLF…VGLV), and 467–487 (VGIV…NPLF).

Belongs to the complex I subunit 2 family. As to quaternary structure, NDH-1 can be composed of about 15 different subunits; different subcomplexes with different compositions have been identified which probably have different functions.

The protein localises to the cellular thylakoid membrane. The catalysed reaction is a plastoquinone + NADH + (n+1) H(+)(in) = a plastoquinol + NAD(+) + n H(+)(out). It catalyses the reaction a plastoquinone + NADPH + (n+1) H(+)(in) = a plastoquinol + NADP(+) + n H(+)(out). In terms of biological role, NDH-1 shuttles electrons from an unknown electron donor, via FMN and iron-sulfur (Fe-S) centers, to quinones in the respiratory and/or the photosynthetic chain. The immediate electron acceptor for the enzyme in this species is believed to be plastoquinone. Couples the redox reaction to proton translocation, and thus conserves the redox energy in a proton gradient. Cyanobacterial NDH-1 also plays a role in inorganic carbon-concentration. The protein is NAD(P)H-quinone oxidoreductase subunit 2 of Microcystis aeruginosa (strain NIES-843 / IAM M-2473).